Consider the following 141-residue polypeptide: 4-hydroxybenzoyl-CoA thioesterase (141 aa).

Aspartate 17 is an active-site residue. Residues tryptophan 47, 59–61 (TPI), and lysine 90 contribute to the substrate site.

It belongs to the 4-hydroxybenzoyl-CoA thioesterase family. As to quaternary structure, homotetramer.

The catalysed reaction is 4-hydroxybenzoyl-CoA + H2O = 4-hydroxybenzoate + CoA + H(+). The protein operates within xenobiotic degradation; 4-chlorobenzoate degradation; 4-hydroxybenzoate from 4-chlorobenzoate: step 3/3. Its activity is regulated as follows. Unaffected by EDTA, Mg(2+), Mn(2+), Fe(2+), Ca(2+), Co(2+) and Zn(2+). Hydrolyzes 4-hydroxybenzoate-CoA, and to a lesser extent benzoyl-CoA and 4-chlorobenzoate-CoA. Not active against aliphatic acyl-CoA thioesters, including palmitoyl-CoA, hexanoyl-CoA and acetyl-CoA. In Pseudomonas sp. (strain CBS-3), this protein is 4-hydroxybenzoyl-CoA thioesterase.